A 332-amino-acid polypeptide reads, in one-letter code: 2-oxoglutarate-dependent dioxygenase ecdK (332 aa).

The Fe2OG dioxygenase domain maps to 178–294; it reads HASELRLNHY…RRSVAFFLKP (117 aa). Residues H206, D208, and H266 each coordinate Fe cation. R285 contacts 2-oxoglutarate.

It belongs to the iron/ascorbate-dependent oxidoreductase family. It depends on Fe(2+) as a cofactor.

Its pathway is antifungal biosynthesis. Functionally, 2-oxoglutarate-dependent dioxygenase; part of the gene cluster that mediates the biosynthesis of echinocandin B, a fungal lipidated cyclic hexapeptide that acts as an antifungal agent. Linoleoyl-AMP, produced by the fatty-acyl-AMP ligase ecdI, is transferred to the initiation carrier domain (T0) of ecdA. The linoleoyl-S-phosphopantetheinyl-T0 is sequentially extended with L-ornithine, L-threonine, L-proline, L-homotyrosine, L-threonine, and 4R-methyl-L-proline to form the linear hexapeptide. Thereafter, the terminal condensation (C7) performs macrocyclization of the NRPS product and the cyclic scaffold is released from ecdA. All six of the amino acid residues are hydroxylated, including 4R,5R-dihydroxy-L-ornithine, 4R-hydroxyl-L-proline, 3S,4S-dihydroxy-L-homotyrosine, and 3S-hydroxyl-4S-methyl-L-prolin. In the pathway, all the hydroxylation reactions are proposed to occur following completion of the cyclic peptide, so the unhydroxylated precursor produced by ecdA will undergo six rounds of hydroxylation. Five hydroxylase genes (ecdG, ecdH, ecdK, htyE and htyF) are embedded within the echinocandin B (ecd) and L-homotyrosine (hty) clusters. The sequence is that of 2-oxoglutarate-dependent dioxygenase ecdK from Aspergillus rugulosus (Emericella rugulosa).